Reading from the N-terminus, the 110-residue chain is U1-lycotoxin-Ls1kk (110 aa).

An N-terminal signal peptide occupies residues 1–20; that stretch reads MKFVLLFGVLLVTLFSYSSA. Positions 21–44 are excised as a propeptide; the sequence is EMFDDFDQADEDELLSLIEKEEAR. 4 disulfide bridges follow: Cys-47–Cys-62, Cys-54–Cys-71, Cys-61–Cys-89, and Cys-73–Cys-87.

Belongs to the neurotoxin 19 (CSTX) family. 03 subfamily. Expressed by the venom gland.

It is found in the secreted. The sequence is that of U1-lycotoxin-Ls1kk from Lycosa singoriensis (Wolf spider).